The sequence spans 426 residues: SrfA-induced gene K protein (426 aa).

Positions 1–23 are cleaved as a signal peptide; that stretch reads MKKMKILSFFILSLAIIIGIVYS. N-linked (GlcNAc...) asparagine glycosylation is found at N64, N136, N160, and N226. Laminin EGF-like domains are found at residues 325–348 and 384–408; these read DNQC…GMVL and CNGT…GGEV. 3 cysteine pairs are disulfide-bonded: C330-C339, C342-C358, and C370-C388. N385 carries an N-linked (GlcNAc...) asparagine glycan.

In Dictyostelium discoideum (Social amoeba), this protein is SrfA-induced gene K protein (sigK).